We begin with the raw amino-acid sequence, 159 residues long: Small ribosomal subunit protein uS17 (159 aa).

Belongs to the universal ribosomal protein uS17 family.

It localises to the cytoplasm. The polypeptide is Small ribosomal subunit protein uS17 (RPS11) (Zea mays (Maize)).